Here is a 560-residue protein sequence, read N- to C-terminus: MDFMKVFDQTVREIKREVNLKVLKVPEMEQKVLDATDNEPWGPHGTALAEIAQATKKFSECQMVMSVLWTRLSETGKDWRYVYKALAVIDYLISNGSERAVDEIIEHTYQISSLTSFEYVEPNGKDVGINVRKKAENIVALLNNKEKISEIRDKAVANRNKYVGLSSTGITYKSGSSASFGGSFQSGSSNFDSYKDRDSREDKNDYESFQKSRRGVKTEEQSYTSKKSFSRYGSTDHDNLSSGKKSPDSAKHRSYVSAAPSNNDDDFDDFDPRGTSSNKPSTGSANQVDLFGGDLIGDFLDSGPTETSSTNNNENFQEADLFADAAFVSASAQGAEFGSQTQKQVDLFSASEPSVTVSSAPPTVDLFASSESVVSPEAKISIPESMATPNIVDPFAAVPMDNFDGSDPFGAFTSHSASVSTGPQAPSVHGSATNTTSPLSFADSKPQHLQKKDPFQVKSGIWADSLSRGLIDLNITAPKKASLADVGVVGDLSNEDGNKASAASYYSGWSMGAGSGLGKTGLYSTQQQQQQQQQQQAPDISDDFFSSLSNQRYQSGGFKQ.

The region spanning 20–152 (LKVLKVPEME…NNKEKISEIR (133 aa)) is the ENTH domain. The interval 190-288 (NFDSYKDRDS…KPSTGSANQV (99 aa)) is disordered. The segment covering 193–220 (SYKDRDSREDKNDYESFQKSRRGVKTEE) has biased composition (basic and acidic residues). The span at 221 to 233 (QSYTSKKSFSRYG) shows a compositional bias: polar residues. The span at 234–251 (STDHDNLSSGKKSPDSAK) shows a compositional bias: basic and acidic residues. A compositionally biased stretch (polar residues) spans 274 to 287 (GTSSNKPSTGSANQ). A Clathrin binding motif is present at residues 296–300 (IGDFL). The ALPHA-ADR binding signature appears at 320–322 (DLF). Over residues 414–439 (SHSASVSTGPQAPSVHGSATNTTSPL) the composition is skewed to polar residues. Disordered stretches follow at residues 414–453 (SHSA…QKKD) and 517–560 (LGKT…GFKQ). Positions 526 to 536 (QQQQQQQQQQQ) are enriched in low complexity. Polar residues predominate over residues 544–554 (FFSSLSNQRYQ).

Belongs to the epsin family. As to quaternary structure, interacts with clathrin, VTI11, GAMMA-ADR and VSR1. Binds to the deubiquitinating enzyme AMSH3. Mostly expressed in cotyledons and flowers, and, to a lower extent, in roots, leaves and siliques (at protein level).

The protein resides in the golgi apparatus. It localises to the prevacuolar compartment. Its subcellular location is the cytoplasm. It is found in the cytoplasmic vesicle. The protein localises to the clathrin-coated vesicle. The protein resides in the cytoskeleton. Its function is as follows. May have a role in transport via clathrin-coated vesicles from the trans-Golgi network to endosomes. Stimulates clathrin assembly. Does not seem to bind to phospholipids. Plays an important role in the vacuolar trafficking of soluble cargo proteins at the trans-Golgi network. In Arabidopsis thaliana (Mouse-ear cress), this protein is Clathrin interactor EPSIN 1 (EPSIN1).